The sequence spans 296 residues: Cytidine deaminase (296 aa).

2 consecutive CMP/dCMP-type deaminase domains span residues 47–167 (TEAE…FGPK) and 186–296 (DSSD…VDPV). A substrate-binding site is contributed by 88-90 (NLE). Position 101 (H101) interacts with Zn(2+). The active-site Proton donor is the E103. Residues C128 and C131 each contribute to the Zn(2+) site.

This sequence belongs to the cytidine and deoxycytidylate deaminase family. Homodimer. Requires Zn(2+) as cofactor.

The catalysed reaction is cytidine + H2O + H(+) = uridine + NH4(+). The enzyme catalyses 2'-deoxycytidine + H2O + H(+) = 2'-deoxyuridine + NH4(+). In terms of biological role, this enzyme scavenges exogenous and endogenous cytidine and 2'-deoxycytidine for UMP synthesis. This is Cytidine deaminase from Shewanella sp. (strain MR-4).